The sequence spans 282 residues: Acyl-CoA-binding domain-containing protein 6 (282 aa).

The segment at 1–34 is disordered; that stretch reads MATPFLPAGATTGDSGGELSSGDDSGDLESFQTP. Ser-41 is subject to Phosphoserine. One can recognise an ACB domain in the interval 42–127; sequence LAELFEKAAA…VKKLDPGWNP (86 aa). Residues 69–73 and Lys-95 contribute to the an acyl-CoA site; that span reads YARYK. Ser-106 carries the post-translational modification Phosphoserine. Tyr-114 serves as a coordination point for an acyl-CoA. ANK repeat units follow at residues 191 to 220 and 224 to 253; these read EGRA…GINC and EGQT…DPTL.

In terms of assembly, monomer.

The protein resides in the cytoplasm. It localises to the nucleus. Its function is as follows. Binds long-chain acyl-coenzyme A molecules with a strong preference for unsaturated C18:1-CoA, lower affinity for unsaturated C20:4-CoA, and very weak affinity for saturated C16:0-CoA. Does not bind fatty acids. Plays a role in protein N-myristoylation. The polypeptide is Acyl-CoA-binding domain-containing protein 6 (Acbd6) (Rattus norvegicus (Rat)).